The primary structure comprises 159 residues: Ribosomal RNA large subunit methyltransferase H (159 aa).

Residues Leu76, Gly108, and Phe127–Phe132 each bind S-adenosyl-L-methionine.

This sequence belongs to the RNA methyltransferase RlmH family. As to quaternary structure, homodimer.

It is found in the cytoplasm. It catalyses the reaction pseudouridine(1915) in 23S rRNA + S-adenosyl-L-methionine = N(3)-methylpseudouridine(1915) in 23S rRNA + S-adenosyl-L-homocysteine + H(+). Functionally, specifically methylates the pseudouridine at position 1915 (m3Psi1915) in 23S rRNA. This Bifidobacterium longum (strain DJO10A) protein is Ribosomal RNA large subunit methyltransferase H.